The primary structure comprises 266 residues: Glucosamine-6-phosphate deaminase (266 aa).

Aspartate 72 functions as the Proton acceptor; for enolization step in the catalytic mechanism. Aspartate 141 (for ring-opening step) is an active-site residue. The Proton acceptor; for ring-opening step role is filled by histidine 143. Glutamate 148 acts as the For ring-opening step in catalysis.

This sequence belongs to the glucosamine/galactosamine-6-phosphate isomerase family. NagB subfamily. Homohexamer.

It carries out the reaction alpha-D-glucosamine 6-phosphate + H2O = beta-D-fructose 6-phosphate + NH4(+). The protein operates within amino-sugar metabolism; N-acetylneuraminate degradation; D-fructose 6-phosphate from N-acetylneuraminate: step 5/5. Allosterically activated by N-acetylglucosamine 6-phosphate (GlcNAc6P). Functionally, catalyzes the reversible isomerization-deamination of glucosamine 6-phosphate (GlcN6P) to form fructose 6-phosphate (Fru6P) and ammonium ion. The chain is Glucosamine-6-phosphate deaminase from Aeromonas salmonicida (strain A449).